The primary structure comprises 470 residues: FAD-dependent monooxygenase nvfK (470 aa).

The signal sequence occupies residues methionine 1–cysteine 23. Positions 35, 49, and 108 each coordinate FAD. An N-linked (GlcNAc...) asparagine glycan is attached at asparagine 121. Residue tyrosine 216 is part of the active site. FAD is bound by residues aspartate 308 and alanine 321. The chain crosses the membrane as a helical span at residues isoleucine 450 to tryptophan 470.

Belongs to the paxM FAD-dependent monooxygenase family. FAD is required as a cofactor.

It is found in the membrane. The catalysed reaction is (3R)-3-farnesyl-6-hydroxy-2,3,5-trimethyl-4-oxocyclohexa-1,5-diene-1-carboxylate + 2-oxoglutarate + O2 = (3R)-[(10S)-11-epoxyfarnesyl]-2,3,5-trimethyl-6-oxido-4-oxocyclohexa-1,5-diene-1-carboxylate + succinate + CO2. The protein operates within secondary metabolite biosynthesis; terpenoid biosynthesis. In terms of biological role, FAD-dependent monooxygenase; part of the gene cluster that mediates the biosynthesis of novofumigatonin, a heavily oxygenated meroterpenoid containing a unique orthoester moiety. The first step of the pathway is the synthesis of 3,5-dimethylorsellinic acid (DMOA) by the polyketide synthase nvfA via condensation of one acetyl-CoA starter unit with 3 malonyl-CoA units and 2 methylations. DMOA is then converted to farnesyl-DMOA by the farnesyltransferase nvfB. Epoxydation by FAD-dependent monooxygenase nvfK, followed by a protonation-initiated cyclization catalyzed by the terpene cyclase nvfL leads to the production of asnavolin H. The short chain dehydrogenase nvfC then as a 3-OH dehydrogenase of asnovolin H to yield chemesin D. There are two branches to synthesize asnovolin A from chemesin D. In one branch, chemesin D undergoes Baeyer-Villiger oxidation by nvfH, methylation by nvfJ, and enoyl reduction by the nvfM D enoylreductase that reduces the double bond between C-5'and C-6', to form respectively asnovolin I, asnovolin K, and asnovolin A. In the other branch, the methylation precedes the Baeyer-Villiger oxidation and the enoyl reduction to yield asnovolin A via the asnovolin J intermediate. Asnovolin A is further converted to fumigatonoid A by the Fe(II)/2-oxoglutarate-dependent dioxygenase nvfI that catalyzes an endoperoxidation reaction. The alpha/beta hydrolase nvfD then acts as an epimerase that converts fumigatonoid A to its C-5' epimer, which then undergoes spontaneous or nvfD-catalyzed lactonization. The following step utilizes the ketoreductase nvfG to produce fumigatonoid B. The dioxygenase nvfE further converts fumigatonoid B into fumigatonoid C. Finally the Fe(II)/2-oxoglutarate-dependent dioxygenase nvfF catalyzes two rounds of oxidation to transform fumigatonoid C into the end product, novofumigatonin A. This is FAD-dependent monooxygenase nvfK from Aspergillus novofumigatus (strain IBT 16806).